The primary structure comprises 886 residues: Vam6/Vps39-like protein (886 aa).

Residues 15 to 294 (PLQIDCLAAW…RFITSGGSNI (280 aa)) form the CNH domain. A CHCR repeat occupies 573-750 (FTEDLPEVES…LLRMYLSPPS (178 aa)).

It belongs to the VAM6/VPS39 family. Homooligomer. Interacts with TGFBR2 and, less efficiently, with TGFBR1; interaction with TGFBR2 is independent of the receptor kinase activity and of the presence of TGF-beta. Also interacts with ACVR2B, but not with BMPR2. Interacts with SMAD4, preferentially following TGF-beta treatment. Does not interact with SAMD2 or SMAD3. Component of the homotypic fusion and vacuole protein sorting (HOPS) complex; the core of which composed of the class C Vps proteins VPS11, VPS16, VPS18 and VPS33A, is associated with VPS39 and VPS41. Interacts with PLEKHM2; involved in VPS39 recruitment to ARL8B-containing lysosomes. Associates with adapter protein complex 3 (AP-3) and clathrin:AP-3 complexes. Interacts with STX17; this interaction is increased in the absence of TMEM39A. Interacts with RAB7, RAB2A and RAB2B. Interacts with RAB2A (GTP-bound); the interaction contributes to obtaining a functional HOPS complex that promotes autophagosome-lysosome membrane fusion driven by STX17-SNAP29-VAMP8. Interacts with RAB39A (GTP-bound) and RAB39B (GTP-bound); interaction with RAB39A contributes to obtaining a functional HOPS complex. As to quaternary structure, (Microbial infection) Interacts with SARS coronavirus-2/SARS-CoV-2 ORF3A protein; the interaction is direct and sequestrates VPS39, thereby preventing HOPS complex from interacting with the autophagosomal SNARE protein STX17. ORF3A enhances the interaction of VPS39 with VPS11 and VPS18, while its interaction with the VPS16:VPS33A module is attenuated. Widely expressed, with highest levels in heart, skeletal muscle, kidney, pancreas, brain, placenta and spleen.

Its subcellular location is the cytoplasm. It localises to the lysosome membrane. It is found in the late endosome membrane. Functionally, regulator of TGF-beta/activin signaling, inhibiting SMAD3- and activating SMAD2-dependent transcription. Acts by interfering with SMAD3/SMAD4 complex formation, this would lead to inhibition of SMAD3-dependent transcription and relieve SMAD3 inhibition of SMAD2-dependent promoters, thus increasing SMAD2-dependent transcription. Does not affect TGF-beta-induced SMAD2 or SMAD3 phosphorylation, nor SMAD2/SMAD4 complex formation. Its function is as follows. Plays a role in vesicle-mediated protein trafficking to lysosomal compartments including the endocytic membrane transport and autophagic pathways. Acts as a component of the HOPS endosomal tethering complex. This complex is proposed to be involved in the Rab5-to-Rab7 endosome conversion probably implicating MON1A/B, and via binding SNAREs and SNARE complexes to mediate tethering and docking events during SNARE-mediated membrane fusion. The HOPS complex is proposed to be recruited to Rab7 on the late endosomal membrane and to regulate late endocytic, phagocytic and autophagic traffic towards lysosomes. Involved in homotypic vesicle fusions between late endosomes and in heterotypic fusions between late endosomes and lysosomes. Required for fusion of endosomes and autophagosomes with lysosomes. This is Vam6/Vps39-like protein from Homo sapiens (Human).